An 80-amino-acid chain; its full sequence is Defensin-like protein 14 (80 aa).

The first 29 residues, 1–29 (MAKSAAIITFLFAALVLFAAFEAPIMVEA), serve as a signal peptide directing secretion. Glutamine 30 carries the post-translational modification Pyrrolidone carboxylic acid. Intrachain disulfides connect cysteine 33/cysteine 80, cysteine 44/cysteine 65, cysteine 50/cysteine 74, and cysteine 54/cysteine 76.

It belongs to the DEFL family.

Its subcellular location is the secreted. Functionally, confers broad-spectrum resistance to pathogens. Has antifungal activity in vitro. The polypeptide is Defensin-like protein 14 (PDF1.3) (Arabidopsis thaliana (Mouse-ear cress)).